Reading from the N-terminus, the 78-residue chain is Alpha-neurotoxin homolog 1 (78 aa).

The N-terminal stretch at 1 to 21 (MKTLLLTLVVVTIVCLDFGYT) is a signal peptide. Disulfide bonds link Cys-24–Cys-42, Cys-37–Cys-57, Cys-59–Cys-70, and Cys-71–Cys-76.

It belongs to the three-finger toxin family. Short-chain subfamily. Orphan group XII sub-subfamily. In terms of tissue distribution, expressed by the venom gland.

The protein resides in the secreted. This Micrurus corallinus (Brazilian coral snake) protein is Alpha-neurotoxin homolog 1.